The primary structure comprises 477 residues: Myc-associated zinc finger protein (477 aa).

Disordered regions lie at residues 59–78 (AQSP…APAA) and 121–146 (TVDT…PAAE). The span at 130-141 (PPAPPPPPPPVS) shows a compositional bias: pro residues. 4 C2H2-type zinc fingers span residues 190 to 212 (YICA…EAIH), 279 to 301 (HACE…KLSH), 307 to 329 (YQCP…VRSH), and 337 to 360 (YNCS…RQVH). Residue Ser361 is modified to Phosphoserine. A C2H2-type 5 zinc finger spans residues 366 to 388 (FKCEKCEAAFATKDRLRAHTVRH). A C2H2-type 6; atypical zinc finger spans residues 392-413 (VPCHVCGKMLSSAYISDHMKVH).

Interacts with BPTF. As to quaternary structure, forms a heterodimer with MAZ isoform 2; the interaction inhibits MAZ isoform 1-mediated transcription activation. In terms of assembly, forms a heterodimer with MAZ isoform 1; the interaction inhibits MAZ isoform 1-mediated transcription activation. Present in kidney, liver and brain. In the brain, highest levels are found in motor cortex and midfrontal cortex (at protein level). In terms of tissue distribution, expressed in the heart, brain, placenta, lung, liver, skeletal muscle and weakly expressed in the kidney. Expressed in the joint synovium.

It is found in the nucleus. Its function is as follows. Transcriptional regulator, potentially with dual roles in transcription initiation and termination. In terms of biological role, binds DNA and functions as a transcriptional activator. Binds to two G/A-rich sites, ME1a1 and ME1a2, within the MYC promoter having greater affinity for the former. Also binds to multiple G/C-rich sites within the promoter of the Sp1 family of transcription factors. Functionally, binds DNA and functions as a transcriptional activator. Inhibits MAZ isoform 1-mediated transcription. Binds DNA and functions as a transcriptional activator. This Homo sapiens (Human) protein is Myc-associated zinc finger protein (MAZ).